A 210-amino-acid polypeptide reads, in one-letter code: Superoxide dismutase [Mn], mitochondrial (210 aa).

Positions 29, 77, 164, and 168 each coordinate Mn(2+).

It belongs to the iron/manganese superoxide dismutase family. Homotetramer. Mn(2+) serves as cofactor.

Its subcellular location is the mitochondrion matrix. The enzyme catalyses 2 superoxide + 2 H(+) = H2O2 + O2. In terms of biological role, destroys superoxide anion radicals which are normally produced within the cells and which are toxic to biological systems. This is Superoxide dismutase [Mn], mitochondrial (sodB) from Aspergillus niger.